The sequence spans 864 residues: Leucine--tRNA ligase (864 aa).

A 'HIGH' region motif is present at residues 47 to 57 (PYPSGNLHMGH). The tract at residues 298–317 (SEQDRVADDRPKRGVATGGT) is disordered. A compositionally biased stretch (basic and acidic residues) spans 299–309 (EQDRVADDRPK). Residues 622 to 626 (KMSKS) carry the 'KMSKS' region motif. ATP is bound at residue K625.

This sequence belongs to the class-I aminoacyl-tRNA synthetase family.

It is found in the cytoplasm. It catalyses the reaction tRNA(Leu) + L-leucine + ATP = L-leucyl-tRNA(Leu) + AMP + diphosphate. The chain is Leucine--tRNA ligase from Synechococcus sp. (strain RCC307).